Reading from the N-terminus, the 284-residue chain is Tropomyosin beta chain (284 aa).

Methionine 1 is subject to N-acetylmethionine. Positions methionine 1–lysine 65 are disordered. The stretch at methionine 1–leucine 284 forms a coiled coil. 2 stretches are compositionally biased toward basic and acidic residues: residues lysine 12–glutamate 40 and lysine 51–lysine 65. Residue threonine 53 is modified to Phosphothreonine. Phosphoserine; by PIK3CG is present on serine 61. Threonine 79 bears the Phosphothreonine mark. Position 87 is a phosphoserine (serine 87). Threonine 108 carries the phosphothreonine modification. Positions glutamate 117–lysine 136 are disordered. 3 positions are modified to phosphoserine: serine 158, serine 206, and serine 215. Threonine 252 carries the post-translational modification Phosphothreonine. Tyrosine 261 is modified (phosphotyrosine). Position 271 is a phosphoserine (serine 271). A Phosphothreonine modification is found at threonine 282. The residue at position 283 (serine 283) is a Phosphoserine.

This sequence belongs to the tropomyosin family. As to quaternary structure, homodimer. Heterodimer of an alpha (TPM1, TPM3 or TPM4) and a beta (TPM2) chain. Phosphorylated on Ser-61 by PIK3CG. Phosphorylation on Ser-61 is required for ADRB2 internalization. As to expression, present in primary breast cancer tissue, absent from normal breast tissue.

The protein resides in the cytoplasm. Its subcellular location is the cytoskeleton. Its function is as follows. Binds to actin filaments in muscle and non-muscle cells. Plays a central role, in association with the troponin complex, in the calcium dependent regulation of vertebrate striated muscle contraction. Smooth muscle contraction is regulated by interaction with caldesmon. In non-muscle cells is implicated in stabilizing cytoskeleton actin filaments. The non-muscle isoform may have a role in agonist-mediated receptor internalization. This chain is Tropomyosin beta chain (TPM2), found in Homo sapiens (Human).